A 568-amino-acid chain; its full sequence is Protein yellow (568 aa).

An N-terminal signal peptide occupies residues 1–28 (MHAQDKGGILPALSLLLIAVAMVSPSQA). 2 N-linked (GlcNAc...) asparagine glycosylation sites follow: Asn151 and Asn222.

It belongs to the major royal jelly protein family.

The protein resides in the secreted. Controls the pigmentation pattern of the adult cuticle and larval mouth parts. The chain is Protein yellow (y) from Drosophila madeirensis (Fruit fly).